Consider the following 83-residue polypeptide: Large ribosomal subunit protein bL31B (83 aa).

This sequence belongs to the bacterial ribosomal protein bL31 family. Type B subfamily. As to quaternary structure, part of the 50S ribosomal subunit.

The chain is Large ribosomal subunit protein bL31B from Bacteroides fragilis (strain ATCC 25285 / DSM 2151 / CCUG 4856 / JCM 11019 / LMG 10263 / NCTC 9343 / Onslow / VPI 2553 / EN-2).